The following is a 436-amino-acid chain: Homeobox protein PKNOX1 (436 aa).

The segment at 24–49 (LKTEQDPNCSEPDVEGVSPPPVGSQT) is disordered. 2 positions are modified to phosphoserine: S33 and S41. One can recognise an MEIS N-terminal domain in the interval 80 to 163 (GSEGTTSASF…MNSETLLSGE (84 aa)). Positions 259 to 321 (SKNKRGVLPK…NARRRILQPM (63 aa)) form a DNA-binding region, homeobox; TALE-type. The interval 401 to 436 (AEQSEDDSVDSTGDGGAALAPGHLGGLVLENSDSLQ) is disordered.

This sequence belongs to the TALE/MEIS homeobox family. Interacts with MN1.

The protein localises to the nucleus. Its function is as follows. Activates transcription in the presence of PBX1A and HOXA1. This is Homeobox protein PKNOX1 from Bos taurus (Bovine).